The following is a 777-amino-acid chain: Isoamylase (777 aa).

Positions 1–32 are cleaved as a signal peptide; that stretch reads MDPHAPQRQRSGQRLRALALAALACALSPAHA. D162, E263, T264, N266, and D293 together coordinate Ca(2+). The Nucleophile role is filled by D410. C419 and C423 form a disulfide bridge. Residue E458 is the Proton donor of the active site.

Belongs to the glycosyl hydrolase 13 family. In terms of assembly, monomer. Ca(2+) serves as cofactor.

It catalyses the reaction Hydrolysis of (1-&gt;6)-alpha-D-glucosidic branch linkages in glycogen, amylopectin and their beta-limit dextrins.. Has a high rate of hydrolysis for glycogen. Does not cleave pullulan. The polypeptide is Isoamylase (iam) (Flavobacterium sp).